Reading from the N-terminus, the 1076-residue chain is GPI inositol-deacylase A (1076 aa).

A helical membrane pass occupies residues 3–23 (IATFPALAITALALVLWATVA). Residues asparagine 48 and asparagine 119 are each glycosylated (N-linked (GlcNAc...) asparagine). Serine 240 is a catalytic residue. A glycan (N-linked (GlcNAc...) asparagine) is linked at asparagine 404. The next 2 helical transmembrane spans lie at 765–785 (FLGF…LCLL) and 815–835 (WILA…SLLY). The N-linked (GlcNAc...) asparagine glycan is linked to asparagine 849. Helical transmembrane passes span 855 to 875 (FLGP…HWLL), 877 to 897 (ILTL…IAPE), and 910 to 930 (FLLL…VAVL). 2 N-linked (GlcNAc...) asparagine glycosylation sites follow: asparagine 952 and asparagine 966. Transmembrane regions (helical) follow at residues 970 to 990 (SLLL…VVWL), 1006 to 1026 (EVSA…GIMI), and 1035 to 1055 (IYAT…HGVV).

It belongs to the GPI inositol-deacylase family.

The protein localises to the endoplasmic reticulum membrane. Involved in inositol deacylation of GPI-anchored proteins which plays important roles in the quality control and ER-associated degradation of GPI-anchored proteins. The sequence is that of GPI inositol-deacylase A (BST1A) from Yarrowia lipolytica (strain CLIB 122 / E 150) (Yeast).